A 298-amino-acid chain; its full sequence is 4-hydroxy-tetrahydrodipicolinate synthase (298 aa).

Pyruvate is bound at residue threonine 48. Tyrosine 137 serves as the catalytic Proton donor/acceptor. Lysine 166 (schiff-base intermediate with substrate) is an active-site residue. Isoleucine 207 contacts pyruvate.

This sequence belongs to the DapA family. In terms of assembly, homotetramer; dimer of dimers.

It is found in the cytoplasm. It carries out the reaction L-aspartate 4-semialdehyde + pyruvate = (2S,4S)-4-hydroxy-2,3,4,5-tetrahydrodipicolinate + H2O + H(+). It participates in amino-acid biosynthesis; L-lysine biosynthesis via DAP pathway; (S)-tetrahydrodipicolinate from L-aspartate: step 3/4. In terms of biological role, catalyzes the condensation of (S)-aspartate-beta-semialdehyde [(S)-ASA] and pyruvate to 4-hydroxy-tetrahydrodipicolinate (HTPA). The protein is 4-hydroxy-tetrahydrodipicolinate synthase of Campylobacter jejuni subsp. jejuni serotype O:6 (strain 81116 / NCTC 11828).